The chain runs to 151 residues: Large ribosomal subunit protein uL22c (151 aa).

This sequence belongs to the universal ribosomal protein uL22 family. As to quaternary structure, part of the 50S ribosomal subunit.

Its subcellular location is the plastid. The protein localises to the chloroplast. This protein binds specifically to 23S rRNA. In terms of biological role, the globular domain of the protein is located near the polypeptide exit tunnel on the outside of the subunit, while an extended beta-hairpin is found that lines the wall of the exit tunnel in the center of the 70S ribosome. The protein is Large ribosomal subunit protein uL22c (rpl22) of Gossypium barbadense (Sea Island cotton).